The primary structure comprises 309 residues: DSC E3 ubiquitin ligase complex subunit C (309 aa).

An N-linked (GlcNAc...) asparagine glycan is attached at Asn-61. Disordered stretches follow at residues 88–110 (LPPS…GKGK) and 148–177 (EQAD…FDRL). The next 2 membrane-spanning stretches (helical) occupy residues 257–277 (DDML…AMWL) and 289–309 (GLAV…RIMN).

This sequence belongs to the dsc3 family. As to quaternary structure, component of the DSC E3 ubiquitin ligase complex composed of dscA, dscB, dscC and dscD.

The protein resides in the endoplasmic reticulum membrane. The protein operates within protein modification; protein ubiquitination. In terms of biological role, component of the DSC E3 ubiquitin ligase complex which is required for the srbA transcriptional activator proteolytic cleavage to release the soluble transcription factor from the membrane in low oxygen or sterol conditions. Required for growth during hypoxia and triazole drug susceptibility, as well as for virulence in a murine model of invasive pulmonary aspergillosis (IPA). The chain is DSC E3 ubiquitin ligase complex subunit C from Aspergillus fumigatus (strain CBS 144.89 / FGSC A1163 / CEA10) (Neosartorya fumigata).